The sequence spans 98 residues: Large ribosomal subunit protein uL23 (98 aa).

It belongs to the universal ribosomal protein uL23 family. Part of the 50S ribosomal subunit. Contacts protein L29, and trigger factor when it is bound to the ribosome.

In terms of biological role, one of the early assembly proteins it binds 23S rRNA. One of the proteins that surrounds the polypeptide exit tunnel on the outside of the ribosome. Forms the main docking site for trigger factor binding to the ribosome. This chain is Large ribosomal subunit protein uL23, found in Maricaulis maris (strain MCS10) (Caulobacter maris).